Reading from the N-terminus, the 89-residue chain is MSLNIKSQRTVALVRELAARTGTNQTAAVEDAVARRLSELDREDRARAEARRAAAEQTLRDLDKLLSDDDKRLIRRHEVDLYDDSGLPR.

Possibly the antitoxin component of a type II toxin-antitoxin (TA) system. Its cognate toxin is VapC42 (Potential). The polypeptide is Putative antitoxin VapB42 (vapB42) (Mycobacterium tuberculosis (strain CDC 1551 / Oshkosh)).